A 3165-amino-acid chain; its full sequence is Protein eyes shut homolog (3165 aa).

Positions 1–21 are cleaved as a signal peptide; sequence MTDKSIVILSLMVFHSSFING. N-linked (GlcNAc...) asparagine glycosylation occurs at N166. EGF-like domains follow at residues 170 to 212, 213 to 254, and 256 to 292; these read KQQF…KYCQ, ELDA…KNCS, and IIGQCQPHVCFHGNCSNITSNSFICECDEQFSGPFCE. 9 disulfide bridges follow: C174–C189, C183–C200, C202–C211, C217–C228, C222–C242, C244–C253, C260–C270, C265–C280, and C282–C291. N269 and N272 each carry an N-linked (GlcNAc...) asparagine glycan. N311 and N343 each carry an N-linked (GlcNAc...) asparagine glycan. 2 EGF-like domains span residues 332 to 368 and 370 to 406; these read DVSEFSLVPCQNGTDCIKISNDVMCICSPIFTDLLCK and IQTSCESFPLRNNATCKKCEKDYPCSCISGFTEKNCE. 4 disulfide bridges follow: C341–C356, C358–C367, C374–C385, and C396–C405. Residues N506 and N566 are each glycosylated (N-linked (GlcNAc...) asparagine). 2 consecutive EGF-like domains span residues 567–602 and 643–679; these read TTDDQENECQHEAVCKDEINRPRCSCSLSYIGRLCV and DTEDCKSASCKNGTTSTHLRGYFFRKCVPGFKGTQCE. Disulfide bonds link C575-C590, C592-C601, C669-C678, C685-C696, C690-C705, C707-C719, C737-C748, C742-C757, C759-C768, C775-C786, C780-C795, C797-C806, C813-C824, C818-C835, C837-C846, C853-C866, C860-C876, C878-C887, C894-C905, C899-C914, C916-C925, C932-C943, C937-C952, C954-C963, C970-C981, C975-C990, C992-C1001, C1008-C1019, C1013-C1028, C1030-C1039, C1046-C1056, C1051-C1065, C1067-C1076, C1083-C1094, C1088-C1103, C1105-C1114, C1121-C1137, C1131-C1147, C1149-C1158, C1165-C1176, C1170-C1185, C1187-C1196, C2037-C2063, C2103-C2114, C2108-C2128, and C2130-C2139. In terms of domain architecture, EGF-like 8; calcium-binding spans 681-720; that stretch reads DIDECASHPCKNGATCIDQPGNYFCQCVPPFKVVDGFSCL. Residues 733-769 enclose the EGF-like 9; calcium-binding domain; it reads DIDDCILNACEHNSTCKDLHLSYQCVCLSDWEGNFCE. The region spanning 771–807 is the EGF-like 10; calcium-binding domain; the sequence is ESNECKMNPCKNNSTCTDLYKSYRCECTSGWTGQNCS. 3 EGF-like domains span residues 809–847, 849–888, and 890–926; these read EINECDSDPCMNGGLCHESTIPGQFVCLCPPLYTGQFCH, RYNLCDLLHNPCRNNSTCLALVDANQHCICREEFEGKNCE, and DVKDCLFLSCQDYGDCEDMVNNFRCICRPGFSGSLCE. One can recognise an EGF-like 14; calcium-binding domain in the interval 928–964; the sequence is EINECSSEPCKNNGTCVDLTNRFFCNCEPEYHGPFCE. Residues 966–1002 form the EGF-like 15 domain; that stretch reads DVNKCKISPCLDEENCVYRTDGYNCLCAPGYTGINCE. The 37-residue stretch at 1004–1040 folds into the EGF-like 16; calcium-binding domain; it reads NLDECLSEPCLHDGVCIDGINHYTCDCKSGFFGTHCE. 3 consecutive EGF-like domains span residues 1042–1077, 1079–1115, and 1117–1159; these read NANDCLSNPCLHGRCTELINEYPCSCDADGTSTQCK, KINDCTSIPCMNEGFCQKSAHGFTCICPRGYTGAYCE, and SIDN…QFCE. One can recognise an EGF-like 20; calcium-binding domain in the interval 1161–1197; that stretch reads NINECSSSPCLHGADCEDHINGYVCKCQPGWSGHHCE. The Laminin G-like 1 domain occupies 1883–2063; the sequence is FSCVRYYGDS…AVKNYHINNC (181 aa). The EGF-like 21 domain occupies 2099 to 2140; the sequence is APSVCQQDVCHNGGTCHAIFLSSGIVSFQCDCPLHFTGRFCE. The Laminin G-like 2 domain maps to 2145-2339; the sequence is LFFPSFNGNS…NIENCHVPWC (195 aa). The N-linked (GlcNAc...) asparagine glycan is linked to N2170. 2 EGF-like domains span residues 2335 to 2368 and 2371 to 2408; these read HVPWCAHHLCRNNGTCISDNENLFCECPRLYSGK and QFASCENNPCGNGATCVPKSGTDIVCLCPYGRSGPLCT. 19 cysteine pairs are disulfide-bonded: C2339–C2350, C2344–C2359, C2375–C2386, C2380–C2396, C2398–C2407, C2576–C2609, C2614–C2625, C2619–C2634, C2636–C2645, C2652–C2668, C2662–C2677, C2679–C2688, C2868–C2895, C2900–C2911, C2905–C2920, C2922–C2931, C2937–C2948, C2942–C2958, and C2960–C2969. The region spanning 2419–2609 is the Laminin G-like 3 domain; sequence SGTDAFGYTS…PNAGRSVGQC (191 aa). 2 consecutive EGF-like domains span residues 2610 to 2646 and 2648 to 2689; these read HASPCSLMKCGNGGTCIESGTSVYCNCTTGWKGSFCT and TVST…IYCE. Positions 2717 to 2895 constitute a Laminin G-like 4 domain; that stretch reads DPSFRSNELS…AKGGSNVGDC (179 aa). EGF-like domains lie at 2896–2932 and 2933–2970; these read DGTACGYNTCRNGGECTVNGTTFSCRCLPDWAGNTCN and QSVSCLNNLCLHQSLCIPDQSFSYSCLCTLGWVGRYCE. The Laminin G-like 5 domain occupies 2975–3165; it reads FSTAKFMGNS…YDGDEQNEVT (191 aa).

It belongs to the EYS family. In terms of tissue distribution, expressed in retina (at protein level). Isoform 1: Detected in retina. Isoform 2: Detected in retina. Isoform 3: Strongly expressed in retina and testis. Isoform 4: Strongly expressed in testis, and weakly expressed in retina.

It localises to the cell projection. The protein resides in the cilium. It is found in the photoreceptor outer segment. The protein localises to the cytoplasm. Its subcellular location is the cytoskeleton. It localises to the cilium axoneme. The protein resides in the microtubule organizing center. It is found in the centrosome. The protein localises to the secreted. Its subcellular location is the extracellular space. It localises to the extracellular matrix. The protein resides in the interphotoreceptor matrix. Functionally, required to maintain the integrity of photoreceptor cells. Specifically required for normal morphology of the photoreceptor ciliary pocket, and might thus facilitate protein trafficking between the photoreceptor inner and outer segments via the transition zone. In Homo sapiens (Human), this protein is Protein eyes shut homolog (EYS).